The primary structure comprises 333 residues: Ribosomal RNA small subunit methyltransferase H (333 aa).

S-adenosyl-L-methionine-binding positions include G43 to H45, D62, Y89, D110, and Q117. Positions R312–P333 are disordered.

The protein belongs to the methyltransferase superfamily. RsmH family.

It localises to the cytoplasm. It catalyses the reaction cytidine(1402) in 16S rRNA + S-adenosyl-L-methionine = N(4)-methylcytidine(1402) in 16S rRNA + S-adenosyl-L-homocysteine + H(+). Functionally, specifically methylates the N4 position of cytidine in position 1402 (C1402) of 16S rRNA. The chain is Ribosomal RNA small subunit methyltransferase H from Beutenbergia cavernae (strain ATCC BAA-8 / DSM 12333 / CCUG 43141 / JCM 11478 / NBRC 16432 / NCIMB 13614 / HKI 0122).